The following is an 881-amino-acid chain: Valine--tRNA ligase (881 aa).

The 'HIGH' region signature appears at 49 to 59 (PNVTGKLHLGH). The 'KMSKS' region signature appears at 526 to 530 (KMSKS). K529 lines the ATP pocket. Residues 810–881 (LADLINLDEE…VRQRLADLEK (72 aa)) adopt a coiled-coil conformation.

It belongs to the class-I aminoacyl-tRNA synthetase family. ValS type 1 subfamily. Monomer.

The protein resides in the cytoplasm. The catalysed reaction is tRNA(Val) + L-valine + ATP = L-valyl-tRNA(Val) + AMP + diphosphate. In terms of biological role, catalyzes the attachment of valine to tRNA(Val). As ValRS can inadvertently accommodate and process structurally similar amino acids such as threonine, to avoid such errors, it has a 'posttransfer' editing activity that hydrolyzes mischarged Thr-tRNA(Val) in a tRNA-dependent manner. This is Valine--tRNA ligase from Bacillus anthracis.